A 754-amino-acid chain; its full sequence is Zinc finger protein with KRAB and SCAN domains 7 (754 aa).

Lys-28 is covalently cross-linked (Glycyl lysine isopeptide (Lys-Gly) (interchain with G-Cter in SUMO2)). The region spanning 54-136 (RLHFRQLCYH…AVVEDFQRHL (83 aa)) is the SCAN box domain. Residues 157–215 (TALGTTKESPPTSPLSGGSAPGAHLEPPYDPGTHHLPSGDFAQCTSPVPTLPQVGNSGD) form a disordered region. 2 stretches are compositionally biased toward polar residues: residues 158 to 172 (ALGTTKESPPTSPLS) and 199 to 215 (QCTSPVPTLPQVGNSGD). Residues 231-306 (VAYEDLSVDY…TSGGLFGVVP (76 aa)) form the KRAB domain. 10 C2H2-type zinc fingers span residues 383–405 (YRCDECGKAFNRSSHLIGHQRIH), 411–433 (YECNECGKTFRQTSQLIVHLRTH), 439–461 (YECSECGKAYRHSSHLIQHQRLH), 467–489 (YKCNECAKAFTQSSRLTDHQRTH), 495–517 (YECNECGEAFIRSKSLARHQVLH), 523–545 (YKCNECGRAFCSNRNLIDHQRIH), 551–573 (YECSECGKAFSRSKCLIRHQSLH), 579–601 (YKCSECGKAFNQNSQLIEHERIH), 607–629 (FECSECGKAFGLSKCLIRHQRLH), and 635–657 (YKCNECGKSFNQNSHLIIHQRIH). The segment at 663-685 (YECNECGKVFSYSSSLMVHQRTH) adopts a C2H2-type 11; degenerate zinc-finger fold. C2H2-type zinc fingers lie at residues 691–713 (YKCNDCGKAFSDSSQLIVHQRVH) and 719–741 (YECSECGKAFSQRSTFNHHQRTH). A disordered region spans residues 735-754 (NHHQRTHTGEKSSGLAWSVS).

It belongs to the krueppel C2H2-type zinc-finger protein family.

Its subcellular location is the nucleus. In terms of biological role, may be involved in transcriptional regulation. The protein is Zinc finger protein with KRAB and SCAN domains 7 (ZKSCAN7) of Homo sapiens (Human).